The chain runs to 167 residues: RNA pyrophosphohydrolase (167 aa).

The region spanning 8–158 (PYRTCVGMML…KRPVYERVVK (151 aa)) is the Nudix hydrolase domain. Residues 47–68 (GGVDPGEDTWEAAKRELYEETN) carry the Nudix box motif.

Belongs to the Nudix hydrolase family. RppH subfamily. The cofactor is a divalent metal cation.

In terms of biological role, accelerates the degradation of transcripts by removing pyrophosphate from the 5'-end of triphosphorylated RNA, leading to a more labile monophosphorylated state that can stimulate subsequent ribonuclease cleavage. In Rhodopseudomonas palustris (strain HaA2), this protein is RNA pyrophosphohydrolase.